The primary structure comprises 330 residues: DNA-directed RNA polymerase subunit alpha (330 aa).

An alpha N-terminal domain (alpha-NTD) region spans residues 1–232; the sequence is MAILAFQKPD…YHFMLFSDEK (232 aa). The tract at residues 248–330 is alpha C-terminal domain (alpha-CTD); it reads EEVLHMRQLL…DISKYKLDKE (83 aa).

Belongs to the RNA polymerase alpha chain family. As to quaternary structure, homodimer. The RNAP catalytic core consists of 2 alpha, 1 beta, 1 beta' and 1 omega subunit. When a sigma factor is associated with the core the holoenzyme is formed, which can initiate transcription.

The catalysed reaction is RNA(n) + a ribonucleoside 5'-triphosphate = RNA(n+1) + diphosphate. In terms of biological role, DNA-dependent RNA polymerase catalyzes the transcription of DNA into RNA using the four ribonucleoside triphosphates as substrates. The chain is DNA-directed RNA polymerase subunit alpha from Bacteroides thetaiotaomicron (strain ATCC 29148 / DSM 2079 / JCM 5827 / CCUG 10774 / NCTC 10582 / VPI-5482 / E50).